Consider the following 352-residue polypeptide: Iron-sulfur cluster carrier protein (352 aa).

114 to 121 (GKGGVGKS) lines the ATP pocket.

This sequence belongs to the Mrp/NBP35 ATP-binding proteins family. Homodimer. Interacts with BrxC.

Its function is as follows. Binds and transfers iron-sulfur (Fe-S) clusters to target apoproteins. Can hydrolyze ATP. Functionally, negatively regulates the expression of hpr/scoC. The effect on hpr/scoC may be indirect. The protein is Iron-sulfur cluster carrier protein (salA) of Bacillus subtilis (strain 168).